Consider the following 424-residue polypeptide: Poly-cysteine and histidine-tailed protein (424 aa).

The signal sequence occupies residues 1–17 (MAFSTIVVLFVAAVGFG). Asparagine 291 carries N-linked (GlcNAc...) asparagine glycosylation. Residues 372 to 390 (VGGKKQQKDQPESEKKAEN) show a composition bias toward basic and acidic residues. A disordered region spans residues 372–424 (VGGKKQQKDQPESEKKAENMPETTGNASHHQHRHHHGDSSSESHEQHHHHHHH). An N-linked (GlcNAc...) asparagine glycan is attached at asparagine 397.

In terms of processing, glycosylated. Expressed in larval tissues like cuticle, hypodermis and muscle (at protein level). Note=Not excreted into striated muscle fibers or nurse cell.

It is found in the secreted. In terms of biological role, binds iron and zinc. May bind nickel. This Trichinella spiralis (Trichina worm) protein is Poly-cysteine and histidine-tailed protein.